A 323-amino-acid polypeptide reads, in one-letter code: Elongation factor P--(R)-beta-lysine ligase (323 aa).

Residue 74-76 (SPE) coordinates substrate. ATP contacts are provided by residues 98–100 (RNE) and asparagine 107. Tyrosine 116 provides a ligand contact to substrate. Position 242 to 243 (242 to 243 (EL)) interacts with ATP. Glutamate 249 contacts substrate. Glycine 298 lines the ATP pocket.

The protein belongs to the class-II aminoacyl-tRNA synthetase family. EpmA subfamily. Homodimer.

It catalyses the reaction D-beta-lysine + L-lysyl-[protein] + ATP = N(6)-((3R)-3,6-diaminohexanoyl)-L-lysyl-[protein] + AMP + diphosphate + H(+). In terms of biological role, with EpmB is involved in the beta-lysylation step of the post-translational modification of translation elongation factor P (EF-P). Catalyzes the ATP-dependent activation of (R)-beta-lysine produced by EpmB, forming a lysyl-adenylate, from which the beta-lysyl moiety is then transferred to the epsilon-amino group of a conserved specific lysine residue in EF-P. This chain is Elongation factor P--(R)-beta-lysine ligase, found in Vibrio atlanticus (strain LGP32) (Vibrio splendidus (strain Mel32)).